The primary structure comprises 962 residues: Replication protein 1a (962 aa).

The Alphavirus-like MT domain maps to 71–270; sequence LQLSKNLCPH…HSWKNIKSFL (200 aa). Positions 79–356 are methyltransferase; the sequence is PHSFAGAMRQ…EEICFRCPKD (278 aa). The disordered stretch occupies residues 536–561; the sequence is DVDERPAGTVSGPTIQAPSVTQENTV. A compositionally biased stretch (polar residues) spans 546-561; that stretch reads SGPTIQAPSVTQENTV. In terms of domain architecture, (+)RNA virus helicase ATP-binding spans 667–820; sequence NKDCVLNNNV…KLSPDSSDQQ (154 aa). The ATP-dependent helicase stretch occupies residues 693–941; that stretch reads LMDGVAGCGK…STKCDLFTDK (249 aa). A (+)RNA virus helicase C-terminal domain is found at 821–962; it reads IRTFRCPKDV…SRKFRLLFGC (142 aa).

This sequence belongs to the bromoviridae replication protein 1a family. As to quaternary structure, interacts with RNA-directed RNA polymerase 2a.

The protein resides in the host endoplasmic reticulum membrane. Its function is as follows. Involved in the virus replication. Contains a helicase domain and a methyltransferase domain. The methyltransferase domain is probably involved in viral RNA capping. Involved in the formation of ER membrane spherular invaginations in which RNA replication complexes form. The sequence is that of Replication protein 1a from Solanum lycopersicum (Tomato).